The chain runs to 93 residues: Acylphosphatase (93 aa).

C5 and C49 are joined by a disulfide. One can recognise an Acylphosphatase-like domain in the interval 5 to 93 (CTIAWIYGRV…ETLTDFSIRY (89 aa)). Residues R20 and N38 contribute to the active site.

The protein belongs to the acylphosphatase family.

The enzyme catalyses an acyl phosphate + H2O = a carboxylate + phosphate + H(+). In Salmonella arizonae (strain ATCC BAA-731 / CDC346-86 / RSK2980), this protein is Acylphosphatase.